A 208-amino-acid polypeptide reads, in one-letter code: Uracil phosphoribosyltransferase (208 aa).

5-phospho-alpha-D-ribose 1-diphosphate contacts are provided by residues arginine 78, arginine 103, and aspartate 130–serine 138. Residues isoleucine 193 and glycine 198–alanine 200 contribute to the uracil site. Aspartate 199 contacts 5-phospho-alpha-D-ribose 1-diphosphate.

It belongs to the UPRTase family. Requires Mg(2+) as cofactor.

The catalysed reaction is UMP + diphosphate = 5-phospho-alpha-D-ribose 1-diphosphate + uracil. It participates in pyrimidine metabolism; UMP biosynthesis via salvage pathway; UMP from uracil: step 1/1. Its activity is regulated as follows. Allosterically activated by GTP. In terms of biological role, catalyzes the conversion of uracil and 5-phospho-alpha-D-ribose 1-diphosphate (PRPP) to UMP and diphosphate. The chain is Uracil phosphoribosyltransferase from Shewanella amazonensis (strain ATCC BAA-1098 / SB2B).